A 268-amino-acid chain; its full sequence is Glutamate racemase (268 aa).

Substrate is bound by residues 9 to 10 and 41 to 42; these read DS and YG. Cys-73 acts as the Proton donor/acceptor in catalysis. 74–75 serves as a coordination point for substrate; that stretch reads NS. Cys-183 (proton donor/acceptor) is an active-site residue. Residue 184–185 coordinates substrate; the sequence is TH.

This sequence belongs to the aspartate/glutamate racemases family.

It catalyses the reaction L-glutamate = D-glutamate. Its pathway is cell wall biogenesis; peptidoglycan biosynthesis. Provides the (R)-glutamate required for cell wall biosynthesis. The polypeptide is Glutamate racemase (Shewanella piezotolerans (strain WP3 / JCM 13877)).